Consider the following 220-residue polypeptide: Fructose-6-phosphate aldolase 1 (220 aa).

Lysine 85 acts as the Schiff-base intermediate with substrate in catalysis.

This sequence belongs to the transaldolase family. Type 3A subfamily. Homodecamer.

The protein resides in the cytoplasm. The enzyme catalyses beta-D-fructose 6-phosphate = dihydroxyacetone + D-glyceraldehyde 3-phosphate. Catalyzes the reversible formation of fructose 6-phosphate from dihydroxyacetone and D-glyceraldehyde 3-phosphate via an aldolization reaction. This chain is Fructose-6-phosphate aldolase 1 (fsaA), found in Escherichia coli O6:H1 (strain CFT073 / ATCC 700928 / UPEC).